Here is a 363-residue protein sequence, read N- to C-terminus: Ribosome-binding ATPase YchF (363 aa).

An OBG-type G domain is found at 3–256 (FKCGIVGLPN…LDDEEKVEFL (254 aa)). 12 to 17 (NVGKST) serves as a coordination point for ATP. Positions 16 and 36 each coordinate Mg(2+). In terms of domain architecture, TGS spans 278–361 (NLQTYFTAGV…QDGDVMHFRF (84 aa)).

Mg(2+) is required as a cofactor.

ATPase that binds to both the 70S ribosome and the 50S ribosomal subunit in a nucleotide-independent manner. Does not hydrolyze GTP. This Haemophilus influenzae (strain ATCC 51907 / DSM 11121 / KW20 / Rd) protein is Ribosome-binding ATPase YchF.